The following is a 321-amino-acid chain: Torsin-2A (321 aa).

The N-terminal stretch at 1–26 (MAVARHGYRPWGSILGLLGLALAAAA) is a signal peptide. 93–100 (GWTGTGKS) is an ATP binding site. N-linked (GlcNAc...) asparagine glycosylation is present at asparagine 149.

This sequence belongs to the ClpA/ClpB family. Torsin subfamily. In terms of assembly, homohexamer. Interacts with TOR1AIP1. N-glycosylated. In terms of tissue distribution, expressed at similar levels in liver, muscle and brain (at protein level).

It localises to the endoplasmic reticulum lumen. The protein is Torsin-2A (Tor2a) of Mus musculus (Mouse).